We begin with the raw amino-acid sequence, 529 residues long: Nucleolar protein 58 (529 aa).

Threonine 34 bears the Phosphothreonine mark. Phosphoserine is present on serine 109. The sufficient for interaction with NOPCHAP1 stretch occupies residues 155-400; it reads ADKVDTMIVQ…LEARLRTLED (246 aa). Lysine 157 participates in a covalent cross-link: Glycyl lysine isopeptide (Lys-Gly) (interchain with G-Cter in SUMO2). Residues 282–400 form the Nop domain; that stretch reads IAPNVTVMVG…LEARLRTLED (119 aa). Residues serine 304 and serine 351 each carry the phosphoserine modification. Glycyl lysine isopeptide (Lys-Gly) (interchain with G-Cter in SUMO2) cross-links involve residues lysine 353, lysine 411, lysine 415, lysine 422, lysine 426, lysine 441, lysine 444, and lysine 465. The segment at 409–529 is disordered; the sequence is TGKALAKTEK…KKKKKRENED (121 aa). Positions 414 to 427 are enriched in basic and acidic residues; sequence AKTEKYEHKSEVKT. Lysine 467 participates in a covalent cross-link: Glycyl lysine isopeptide (Lys-Gly) (interchain with G-Cter in SUMO); alternate. Lysine 467 participates in a covalent cross-link: Glycyl lysine isopeptide (Lys-Gly) (interchain with G-Cter in SUMO1); alternate. Lysine 467 participates in a covalent cross-link: Glycyl lysine isopeptide (Lys-Gly) (interchain with G-Cter in SUMO2); alternate. Acidic residues predominate over residues 469–481; it reads EEEEEEKVAEEEE. Serine 483 bears the Phosphoserine mark. A Glycyl lysine isopeptide (Lys-Gly) (interchain with G-Cter in SUMO2) cross-link involves residue lysine 485. Over residues 485-495 the composition is skewed to basic residues; that stretch reads KKKKKRGKKKH. A Glycyl lysine isopeptide (Lys-Gly) (interchain with G-Cter in SUMO); alternate cross-link involves residue lysine 497. Lysine 497 is covalently cross-linked (Glycyl lysine isopeptide (Lys-Gly) (interchain with G-Cter in SUMO2); alternate). Phosphoserine is present on residues serine 502 and serine 514. Over residues 517–529 the composition is skewed to basic residues; sequence KKKKKKKKRENED.

It belongs to the NOP5/NOP56 family. As to quaternary structure, core component of box C/D small nucleolar ribonucleoprotein (snoRNP) particles; the core proteins SNU13, NOP56, NOP58 and FBL or FBLL1 assemble stepwise onto the snoRNA. Interacts with NOLC1/Nopp140. Interacts with NOPCHAP1, NUFIP1, RUVBL1 and RUVBL2; NOPCHAP1 bridges the association of NOP58 with RUVBL1:RUVBL2 and NUFIP1. Interacts with PIH1D1. Part of the small subunit (SSU) processome, composed of more than 70 proteins and the RNA chaperone small nucleolar RNA (snoRNA) U3. Post-translationally, sumoylation is essential for high-affinity binding to snoRNAs. In terms of tissue distribution, ubiquitous.

The protein localises to the nucleus. It is found in the nucleolus. The protein resides in the nucleoplasm. Functionally, required for the biogenesis of box C/D snoRNAs such as U3, U8 and U14 snoRNAs. Part of the small subunit (SSU) processome, first precursor of the small eukaryotic ribosomal subunit. During the assembly of the SSU processome in the nucleolus, many ribosome biogenesis factors, an RNA chaperone and ribosomal proteins associate with the nascent pre-rRNA and work in concert to generate RNA folding, modifications, rearrangements and cleavage as well as targeted degradation of pre-ribosomal RNA by the RNA exosome. Core component of box C/D small nucleolar ribonucleoprotein (snoRNP) complexes that function in methylation of multiple sites on ribosomal RNAs (rRNAs) and messenger RNAs (mRNAs). The chain is Nucleolar protein 58 from Homo sapiens (Human).